Consider the following 320-residue polypeptide: Stress-induced-phosphoprotein 1 (320 aa).

6 TPR repeats span residues 5 to 38 (AIAE…DPSN), 40 to 72 (TFYN…GRET), 80 to 113 (AKAM…FRDP), 140 to 173 (AQEE…DPEN), 175 to 207 (ILYS…DSKF), and 208 to 241 (IKGY…DPSN). The disordered stretch occupies residues 241-269 (NEEAREGVRNCLRSNDEDPEKAKERSLAD). The segment covering 242 to 269 (EEAREGVRNCLRSNDEDPEKAKERSLAD) has biased composition (basic and acidic residues). The region spanning 269 to 308 (DPEVQEILRDPGMRMILEQMSNDPGAVREHLKNPEIFQKL) is the STI1 domain.

In terms of assembly, forms a complex with hsp-1/hsp70 and daf-21/hsp90. Interacts with daf-21/hsp90 (via the C-terminal MEEVD pentapeptide). Expressed ubiquitously in the whole body. Detected predominantly in the pharyngeal muscles, vulva epithelial cells, striated body-wall muscles, spermathecae and intestinal cell ring. Also observed in the tail regions of hermaphrodite and in the sensory rays and spicules of males.

It is found in the cytoplasm. Plays a role in gonad development. Up-regulates longevity and thermotolerance. Binds daf-21/hsp90 and inhibits its ATPase activity. This chain is Stress-induced-phosphoprotein 1, found in Caenorhabditis elegans.